Consider the following 362-residue polypeptide: Terpene synthase 3 (362 aa).

The DDxx(x)D/E motif motif lies at 90-95 (DDFLER). The short motif at 239–247 (NDCVSYAKE) is the NDxxSxxxD/E motif element.

Belongs to the terpene synthase family.

It carries out the reaction (2E,6E)-farnesyl diphosphate = beta-maaliene + diphosphate. The catalysed reaction is (2E,6E)-farnesyl diphosphate = aristolene + diphosphate. The enzyme catalyses (2E,6E)-farnesyl diphosphate = calarene + diphosphate. It catalyses the reaction (2E)-geranyl diphosphate = (E)-beta-ocimene + diphosphate. It carries out the reaction (2E)-geranyl diphosphate = (Z)-beta-ocimene + diphosphate. The catalysed reaction is (2E)-geranyl diphosphate + H2O = linalool + diphosphate. The enzyme catalyses (2E)-geranyl diphosphate = beta-myrcene + diphosphate. In terms of biological role, terpene synthase that converts its substrate farnesyl diphosphate (FPP) into an unidentified sesquiterpene as a major product, as well as beta-maaliene, aristolene, calarene and 2 additional unidentified sesquiterpene as minor products. Is also able to convert geranyl diphosphate (GPP) into a mixture of monoterpenes including (Z)-beta-ocimene, (E)-beta-ocimene, allo-ocimene, linalool and beta-myrcene. The polypeptide is Terpene synthase 3 (Dictyostelium discoideum (Social amoeba)).